We begin with the raw amino-acid sequence, 554 residues long: CTP synthase (554 aa).

The tract at residues 1–270 (MTKFVFVTGG…DGLICDKLRL (270 aa)) is amidoligase domain. A CTP-binding site is contributed by Ser-13. Ser-13 is a UTP binding site. ATP-binding positions include 14 to 19 (SLGKGI) and Asp-71. Mg(2+) is bound by residues Asp-71 and Glu-144. CTP-binding positions include 151 to 153 (DIE), 191 to 196 (KTKPTQ), and Lys-227. UTP is bound by residues 191-196 (KTKPTQ) and Lys-227. The 254-residue stretch at 295–548 (TVAMVGKYVD…IAAAKARHQA (254 aa)) folds into the Glutamine amidotransferase type-1 domain. Gly-357 is an L-glutamine binding site. Residue Cys-384 is the Nucleophile; for glutamine hydrolysis of the active site. Residues 385–388 (LGMQ), Glu-408, and Arg-474 each bind L-glutamine. Residues His-521 and Glu-523 contribute to the active site.

It belongs to the CTP synthase family. As to quaternary structure, homotetramer.

It carries out the reaction UTP + L-glutamine + ATP + H2O = CTP + L-glutamate + ADP + phosphate + 2 H(+). The catalysed reaction is L-glutamine + H2O = L-glutamate + NH4(+). It catalyses the reaction UTP + NH4(+) + ATP = CTP + ADP + phosphate + 2 H(+). The protein operates within pyrimidine metabolism; CTP biosynthesis via de novo pathway; CTP from UDP: step 2/2. Its activity is regulated as follows. Allosterically activated by GTP, when glutamine is the substrate; GTP has no effect on the reaction when ammonia is the substrate. The allosteric effector GTP functions by stabilizing the protein conformation that binds the tetrahedral intermediate(s) formed during glutamine hydrolysis. Inhibited by the product CTP, via allosteric rather than competitive inhibition. In terms of biological role, catalyzes the ATP-dependent amination of UTP to CTP with either L-glutamine or ammonia as the source of nitrogen. Regulates intracellular CTP levels through interactions with the four ribonucleotide triphosphates. This chain is CTP synthase, found in Verminephrobacter eiseniae (strain EF01-2).